The sequence spans 172 residues: Bcl-2-related protein A1 (172 aa).

The BH1 motif lies at 77 to 97 (KEFEDGIINWGRIVTIFAFGG). Positions 132–147 (EWIRQNGGWEDGFIKK) match the BH2 motif.

The protein belongs to the Bcl-2 family. In terms of assembly, interacts directly with BCL2L11/BIM and PMAIP1. Interacts directly with BAK1, BID, BMF and BBC3. Interacts with BOP. Interacts with isoform 3, isoform 4 and isoform 5 of ING4. Interacts with UBQLN4. As to expression, expressed in hemopoietic tissues, including bone marrow, spleen and thymus.

The protein resides in the cytoplasm. In terms of biological role, retards apoptosis induced by IL-3 deprivation. May function in the response of hemopoietic cells to external signals and in maintaining endothelial survival during infection. Can inhibit apoptosis induced by serum starvation in the mammary epithelial cell line HC11. The protein is Bcl-2-related protein A1 (Bcl2a1) of Mus musculus (Mouse).